The primary structure comprises 236 residues: Ubiquinone biosynthesis O-methyltransferase (236 aa).

Arg36, Gly56, Asp77, and Met125 together coordinate S-adenosyl-L-methionine.

This sequence belongs to the methyltransferase superfamily. UbiG/COQ3 family.

It catalyses the reaction a 3-demethylubiquinol + S-adenosyl-L-methionine = a ubiquinol + S-adenosyl-L-homocysteine + H(+). The enzyme catalyses a 3-(all-trans-polyprenyl)benzene-1,2-diol + S-adenosyl-L-methionine = a 2-methoxy-6-(all-trans-polyprenyl)phenol + S-adenosyl-L-homocysteine + H(+). It functions in the pathway cofactor biosynthesis; ubiquinone biosynthesis. Functionally, O-methyltransferase that catalyzes the 2 O-methylation steps in the ubiquinone biosynthetic pathway. The polypeptide is Ubiquinone biosynthesis O-methyltransferase (Haemophilus ducreyi (strain 35000HP / ATCC 700724)).